We begin with the raw amino-acid sequence, 240 residues long: DNA repair protein RecO (240 aa).

The protein belongs to the RecO family.

Functionally, involved in DNA repair and RecF pathway recombination. The sequence is that of DNA repair protein RecO from Wolbachia pipientis wMel.